Here is a 761-residue protein sequence, read N- to C-terminus: Xaa-Pro dipeptidyl-peptidase (761 aa).

Residues Ser347, Asp467, and His497 each act as charge relay system in the active site.

This sequence belongs to the peptidase S15 family. As to quaternary structure, homodimer.

The protein resides in the cytoplasm. The enzyme catalyses Hydrolyzes Xaa-Pro-|- bonds to release unblocked, N-terminal dipeptides from substrates including Ala-Pro-|-p-nitroanilide and (sequentially) Tyr-Pro-|-Phe-Pro-|-Gly-Pro-|-Ile.. Its function is as follows. Removes N-terminal dipeptides sequentially from polypeptides having unsubstituted N-termini provided that the penultimate residue is proline. The sequence is that of Xaa-Pro dipeptidyl-peptidase from Streptococcus agalactiae serotype III (strain NEM316).